Here is a 237-residue protein sequence, read N- to C-terminus: Splicing factor U2AF 35 kDa subunit (237 aa).

A2 carries the N-acetylalanine modification. Residues 12-40 (EKDKVNCSFYFKIGACRHGDRCSRLHNKP) form a C3H1-type 1 zinc finger. N6-methyllysine is present on K39. A phosphoserine mark is found at S61 and S145. Residues 65–147 (LRCAVSDVEM…QPIHAELSPV (83 aa)) enclose the RRM domain. A C3H1-type 2 zinc finger spans residues 149–176 (DFREACCRQYEMGECTRGGFCNFMHLKP). R165 is subject to Omega-N-methylarginine. Residues 185–237 (LYGRRRKKHRSRSRSRERRSRSRDRGRGGGGGGGGGRERDRRRSRDRERSGRF) form a disordered region. Over residues 188–208 (RRRKKHRSRSRSRERRSRSRD) the composition is skewed to basic residues. Positions 220-237 (GRERDRRRSRDRERSGRF) are enriched in basic and acidic residues.

The protein belongs to the splicing factor SR family. Identified in the spliceosome C complex. Heterodimer with U2AF2. Interacts (via RS domain) with PHF5A (via N-terminus). Interacts with ZRANB2. Interacts with SDE2. Interacts with SF3B1.

It is found in the nucleus. The protein localises to the nucleus speckle. Its function is as follows. Plays a critical role in both constitutive and enhancer-dependent splicing by mediating protein-protein interactions and protein-RNA interactions required for accurate 3'-splice site selection. Recruits U2 snRNP to the branch point. Directly mediates interactions between U2AF2 and proteins bound to the enhancers and thus may function as a bridge between U2AF2 and the enhancer complex to recruit it to the adjacent intron. The protein is Splicing factor U2AF 35 kDa subunit (U2AF1) of Bos taurus (Bovine).